The chain runs to 762 residues: Xaa-Pro dipeptidyl-peptidase (762 aa).

Residues serine 349, aspartate 469, and histidine 499 each act as charge relay system in the active site.

The protein belongs to the peptidase S15 family. Homodimer.

The protein resides in the cytoplasm. The catalysed reaction is Hydrolyzes Xaa-Pro-|- bonds to release unblocked, N-terminal dipeptides from substrates including Ala-Pro-|-p-nitroanilide and (sequentially) Tyr-Pro-|-Phe-Pro-|-Gly-Pro-|-Ile.. Its function is as follows. Removes N-terminal dipeptides sequentially from polypeptides having unsubstituted N-termini provided that the penultimate residue is proline. This is Xaa-Pro dipeptidyl-peptidase from Streptococcus sanguinis (strain SK36).